A 45-amino-acid chain; its full sequence is Large ribosomal subunit protein bL34 (45 aa).

Residues 1-10 are compositionally biased toward polar residues; that stretch reads MTQRTLGGTN. A disordered region spans residues 1–45; the sequence is MTQRTLGGTNRKQKRTSGFRARMRKSNGRKVIQARRKKGRHRLSV. Positions 11-45 are enriched in basic residues; sequence RKQKRTSGFRARMRKSNGRKVIQARRKKGRHRLSV.

Belongs to the bacterial ribosomal protein bL34 family.

This chain is Large ribosomal subunit protein bL34, found in Crocosphaera subtropica (strain ATCC 51142 / BH68) (Cyanothece sp. (strain ATCC 51142)).